We begin with the raw amino-acid sequence, 113 residues long: Cell division protein FtsB (113 aa).

At 1–3 the chain is on the cytoplasmic side; it reads MRL. The chain crosses the membrane as a helical span at residues 4 to 21; sequence ISLLLFVLLLAIQYPLWL. At 22–113 the chain is on the periplasmic side; it reads GKGGWLRVWD…PNSVAGRGGH (92 aa). A coiled-coil region spans residues 34 to 64; the sequence is RQVNEQTVHNQALKLRNAKLEGEVKDLQDGT. The disordered stretch occupies residues 93–113; the sequence is KVSATPPLPPPPNSVAGRGGH.

The protein belongs to the FtsB family. Part of a complex composed of FtsB, FtsL and FtsQ.

The protein resides in the cell inner membrane. Essential cell division protein. May link together the upstream cell division proteins, which are predominantly cytoplasmic, with the downstream cell division proteins, which are predominantly periplasmic. In Cupriavidus metallidurans (strain ATCC 43123 / DSM 2839 / NBRC 102507 / CH34) (Ralstonia metallidurans), this protein is Cell division protein FtsB.